Here is a 205-residue protein sequence, read N- to C-terminus: Putative 3-methyladenine DNA glycosylase (205 aa).

It belongs to the DNA glycosylase MPG family.

This chain is Putative 3-methyladenine DNA glycosylase, found in Clostridium acetobutylicum (strain ATCC 824 / DSM 792 / JCM 1419 / IAM 19013 / LMG 5710 / NBRC 13948 / NRRL B-527 / VKM B-1787 / 2291 / W).